The following is a 641-amino-acid chain: Chaperone protein DnaK (641 aa).

Threonine 199 is modified (phosphothreonine; by autocatalysis). Positions 577–590 (KGDNKDEIETRTQK) are enriched in basic and acidic residues. The disordered stretch occupies residues 577–641 (KGDNKDEIET…EFEEVDDKKK (65 aa)). The segment covering 617–626 (GAEQASAQQD) has biased composition (low complexity). Residues 627–641 (DVVDAEFEEVDDKKK) are compositionally biased toward acidic residues.

It belongs to the heat shock protein 70 family.

Its function is as follows. Acts as a chaperone. The polypeptide is Chaperone protein DnaK (Thioalkalivibrio sulfidiphilus (strain HL-EbGR7)).